The chain runs to 183 residues: Photosystem II extrinsic protein V (183 aa).

The first 31 residues, 1–31 (MTFGHCRRASTLRSAFVLGLCGLLLAGCSGA), serve as a signal peptide directing secretion. The heme c site is built by C84, C87, H88, and C138.

The protein belongs to the cytochrome c family. PsbV subfamily. As to quaternary structure, PSII is composed of 1 copy each of membrane proteins PsbA, PsbB, PsbC, PsbD, PsbE, PsbF, PsbH, PsbI, PsbJ, PsbK, PsbL, PsbM, PsbT, PsbX, Psb30/Ycf12, peripheral proteins PsbO, CyanoQ (PsbQ), PsbU, PsbV and a large number of cofactors. It forms dimeric complexes. The cofactor is heme c.

The protein localises to the cell inner membrane. Probably one of the extrinsic, lumenal subunits of photosystem II (PSII). PSII is a light-driven water plastoquinone oxidoreductase, using light energy to abstract electrons from H(2)O, generating a proton gradient subsequently used for ATP formation. The extrinsic proteins stabilize the structure of photosystem II oxygen-evolving complex (OEC), the ion environment of oxygen evolution and protect the OEC against heat-induced inactivation. Low-potential cytochrome c that plays a role in the OEC of PSII. In Gloeobacter violaceus (strain ATCC 29082 / PCC 7421), this protein is Photosystem II extrinsic protein V (psbV1).